Consider the following 128-residue polypeptide: RutC family protein BU371 (128 aa).

The protein belongs to the RutC family.

The chain is RutC family protein BU371 from Buchnera aphidicola subsp. Acyrthosiphon pisum (strain APS) (Acyrthosiphon pisum symbiotic bacterium).